A 112-amino-acid polypeptide reads, in one-letter code: uncharacterized protein (112 aa).

Residues Asn-29 and Asn-60 are each glycosylated (N-linked (GlcNAc...) asparagine; by host). A helical membrane pass occupies residues 66–86; it reads IFNGLGFILIVIFIYLLLITL.

Belongs to the asfivirus B117L family.

Its subcellular location is the host membrane. The protein resides in the virion. This is an uncharacterized protein from African swine fever virus (isolate Tick/South Africa/Pretoriuskop Pr4/1996) (ASFV).